The sequence spans 74 residues: ATP synthase subunit c (74 aa).

The next 2 membrane-spanning stretches (helical) occupy residues 5–25 and 49–69; these read LAYI…LGVG and LFIG…VALL.

This sequence belongs to the ATPase C chain family. F-type ATPases have 2 components, F(1) - the catalytic core - and F(0) - the membrane proton channel. F(1) has five subunits: alpha(3), beta(3), gamma(1), delta(1), epsilon(1). F(0) has three main subunits: a(1), b(2) and c(10-14). The alpha and beta chains form an alternating ring which encloses part of the gamma chain. F(1) is attached to F(0) by a central stalk formed by the gamma and epsilon chains, while a peripheral stalk is formed by the delta and b chains.

The protein localises to the cell inner membrane. In terms of biological role, f(1)F(0) ATP synthase produces ATP from ADP in the presence of a proton or sodium gradient. F-type ATPases consist of two structural domains, F(1) containing the extramembraneous catalytic core and F(0) containing the membrane proton channel, linked together by a central stalk and a peripheral stalk. During catalysis, ATP synthesis in the catalytic domain of F(1) is coupled via a rotary mechanism of the central stalk subunits to proton translocation. Its function is as follows. Key component of the F(0) channel; it plays a direct role in translocation across the membrane. A homomeric c-ring of between 10-14 subunits forms the central stalk rotor element with the F(1) delta and epsilon subunits. The sequence is that of ATP synthase subunit c from Ruegeria sp. (strain TM1040) (Silicibacter sp.).